We begin with the raw amino-acid sequence, 178 residues long: ATP synthase subunit delta (178 aa).

The protein belongs to the ATPase delta chain family. As to quaternary structure, F-type ATPases have 2 components, F(1) - the catalytic core - and F(0) - the membrane proton channel. F(1) has five subunits: alpha(3), beta(3), gamma(1), delta(1), epsilon(1). F(0) has three main subunits: a(1), b(2) and c(10-14). The alpha and beta chains form an alternating ring which encloses part of the gamma chain. F(1) is attached to F(0) by a central stalk formed by the gamma and epsilon chains, while a peripheral stalk is formed by the delta and b chains.

Its subcellular location is the cell membrane. Its function is as follows. F(1)F(0) ATP synthase produces ATP from ADP in the presence of a proton or sodium gradient. F-type ATPases consist of two structural domains, F(1) containing the extramembraneous catalytic core and F(0) containing the membrane proton channel, linked together by a central stalk and a peripheral stalk. During catalysis, ATP synthesis in the catalytic domain of F(1) is coupled via a rotary mechanism of the central stalk subunits to proton translocation. Functionally, this protein is part of the stalk that links CF(0) to CF(1). It either transmits conformational changes from CF(0) to CF(1) or is implicated in proton conduction. In Streptococcus thermophilus (strain ATCC BAA-250 / LMG 18311), this protein is ATP synthase subunit delta.